The chain runs to 825 residues: Interleukin-4 receptor subunit alpha (825 aa).

An N-terminal signal peptide occupies residues 1 to 25 (MGWLCSGLLFPVSCLVLLQVASSGN). Over 26-232 (MKVLQEPTCV…NSYREPFEQH (207 aa)) the chain is Extracellular. Cys34 and Cys44 are disulfide-bonded. A glycan (N-linked (GlcNAc...) asparagine) is linked at Asn53. Residues Cys74 and Cys86 are joined by a disulfide bond. Asn98, Asn128, Asn134, Asn176, and Asn209 each carry an N-linked (GlcNAc...) asparagine glycan. The Fibronectin type-III domain maps to 125-224 (APGNLTVHTN…WSPSTKWHNS (100 aa)). The short motif at 212–216 (WSEWS) is the WSXWS motif element. The helical transmembrane segment at 233–256 (LLLGVSVSCIVILAVCLLCYVSIT) threads the bilayer. The Cytoplasmic segment spans residues 257-825 (KIKKEWWDQI…SVGPTYMRVS (569 aa)). The short motif at 262-270 (WWDQIPNPA) is the Box 1 motif element. Disordered stretches follow at residues 373 to 397 (EEEEVEEEKGSFCASPESSRDDFQE) and 433 to 485 (LPPS…LTCT). Residues 437 to 557 (GSTSAHMPWD…ETWEQILRRN (121 aa)) are required for IRS1 activation and IL4-induced cell growth. The span at 475–485 (PTQSPDNLTCT) shows a compositional bias: polar residues. 4 positions are modified to phosphotyrosine: Tyr497, Tyr575, Tyr603, and Tyr631. The required for IL4-induced gene expression stretch occupies residues 558–657 (VLQHGAAAAP…VPVPLFTFGL (100 aa)). The disordered stretch occupies residues 651–703 (PLFTFGLDREPPRSPQSSHLPSSSPEHLGLEPGEKVEDMPKPPLPQEQATDPL). Over residues 665 to 677 (PQSSHLPSSSPEH) the composition is skewed to low complexity. Residues 678-690 (LGLEPGEKVEDMP) show a composition bias toward basic and acidic residues. Positions 711–716 (IVYSAL) match the ITIM motif motif. Positions 782–809 (PSGISEKSKSSSSFHPAPGNAQSSSQTP) are disordered.

This sequence belongs to the type I cytokine receptor family. Type 4 subfamily. As to quaternary structure, the functional IL4 receptor is formed by initial binding of IL4 to IL4R. Subsequent recruitment to the complex of the common gamma chain, in immune cells, creates a type I receptor and, in non-immune cells, of IL13RA1 forms a type II receptor. IL4R can also interact with the IL13/IL13RA1 complex to form a similar type II receptor. Interacts with PIK3C3. Interacts with the SH2-containing phosphatases, PTPN6/SHIP1, PTPN11/SHIP2 and INPP5D/SHIP. Interacts with JAK1 through a Box 1-containing region; inhibited by SOCS5. Interacts with SOCS5; inhibits IL4 signaling. Interacts with JAK3. Interacts with CLM1. Interacts with IL13RA2. Post-translationally, on IL4 binding, phosphorylated on C-terminal tyrosine residues. Phosphorylation on any one of tyrosine residues, Tyr-575, Tyr-603 or Tyr-631, is required for STAT6-induced gene induction. In terms of processing, the soluble form (sIL4R/IL4BP) can also be produced by proteolytic cleavage at the cell surface (shedding) by a metalloproteinase. As to expression, isoform 1 and isoform 2 are highly expressed in activated T-cells.

It localises to the cell membrane. The protein localises to the secreted. Functionally, receptor for both interleukin 4 and interleukin 13. Couples to the JAK1/2/3-STAT6 pathway. The IL4 response is involved in promoting Th2 differentiation. The IL4/IL13 responses are involved in regulating IgE production and, chemokine and mucus production at sites of allergic inflammation. In certain cell types, can signal through activation of insulin receptor substrates, IRS1/IRS2. Its function is as follows. Soluble IL4R (sIL4R) inhibits IL4-mediated cell proliferation and IL5 up-regulation by T-cells. In Homo sapiens (Human), this protein is Interleukin-4 receptor subunit alpha (IL4R).